The following is a 140-amino-acid chain: Hexon-interlacing protein (140 aa).

Residues 100-127 (LTALLAQLDSLTRELNVVSQQLLDLRQQ) are a coiled coil. Serine 135 is subject to Phosphoserine; by host.

It belongs to the adenoviridae hexon-interlacing protein family. In terms of assembly, homotrimer. Interacts with hexon protein; this interaction tethers the hexons together. Self-interacts with adjacent proteins. Interacts with kinesin light chain KLC1; this interaction leads to capsid disruption at the nuclear pore complex during virus entry into host cell.

It is found in the virion. It localises to the host nucleus. Structural component of the virion that forms triskelion structures consisting of three molecules that stabilize three hexon trimers at the center of each icosahedral facet and fixes the peripentonal hexons. Dispensable for assembly. During virus entry, recruits the anterograde motor kinesin-1 to the capsid docked at the nuclear pore complex thereby subjecting the docked capsid to a pulling force. The resulting tension leads to capsid disruption, dispersion of capsid fragments toward cell periphery and eventually viral DNA entry into the host nucleus. This is Hexon-interlacing protein from Human adenovirus C serotype 2 (HAdV-2).